The primary structure comprises 247 residues: Acetate transporter protein patA (247 aa).

Asparagine 20 carries an N-linked (GlcNAc...) asparagine glycan. Transmembrane regions (helical) follow at residues 37–57 (PPIT…AIAF), 71–91 (AITN…LVLV), 106–126 (VFGG…PAFG), 141–161 (ALGY…IAAM), 169–189 (AMLG…FAMA), and 202–222 (AAGA…AHLM).

This sequence belongs to the acetate uptake transporter (AceTr) (TC 2.A.96) family.

Its subcellular location is the endoplasmic reticulum membrane. It functions in the pathway mycotoxin biosynthesis; patulin biosynthesis. Its function is as follows. Acetate transporter protein; part of the gene cluster that mediates the biosynthesis of patulin, an acetate-derived tetraketide mycotoxin produced by several fungal species that shows antimicrobial properties against several bacteria. May be involved in the uptake of acetate, a substrate for the synthesis of 6-methylsalicylic acid by the polyketide synthase patK. The polypeptide is Acetate transporter protein patA (Aspergillus clavatus (strain ATCC 1007 / CBS 513.65 / DSM 816 / NCTC 3887 / NRRL 1 / QM 1276 / 107)).